A 338-amino-acid polypeptide reads, in one-letter code: Citramalyl-CoA lyase, mitochondrial (338 aa).

Residues 1–20 (MALCVLQNAVRGAAALPRLK) constitute a mitochondrion transit peptide. Residues tyrosine 48, lysine 55, and lysine 59 each coordinate substrate. Lysine 55, lysine 59, and lysine 64 each carry N6-acetyllysine. Residues lysine 80 and lysine 90 each carry the N6-acetyllysine; alternate modification. Residues lysine 80 and lysine 90 each carry the N6-succinyllysine; alternate modification. Arginine 105 lines the substrate pocket. The Mg(2+) site is built by glutamate 169 and aspartate 204. 270–271 (IH) serves as a coordination point for substrate. Residue lysine 307 is modified to N6-succinyllysine. Aspartate 318 is a catalytic residue.

The protein belongs to the HpcH/HpaI aldolase family. Citrate lyase beta subunit-like subfamily. Homotrimer. Mg(2+) serves as cofactor.

It is found in the mitochondrion. It carries out the reaction glyoxylate + acetyl-CoA + H2O = (S)-malate + CoA + H(+). The catalysed reaction is propanoyl-CoA + glyoxylate + H2O = 3-methylmalate + CoA + H(+). It catalyses the reaction (3S)-citramalyl-CoA = pyruvate + acetyl-CoA. The enzyme catalyses (S)-malyl-CoA + H2O = (S)-malate + CoA + H(+). Mitochondrial citramalyl-CoA lyase indirectly involved in the vitamin B12 metabolism. Converts citramalyl-CoA into acetyl-CoA and pyruvate in the C5-dicarboxylate catabolism pathway. The C5-dicarboxylate catabolism pathway is required to detoxify itaconate, a vitamin B12-poisoning metabolite. Also acts as a malate synthase in vitro, converting glyoxylate and acetyl-CoA to malate. Also displays malyl-CoA thioesterase activity. Also acts as a beta-methylmalate synthase in vitro, by mediating conversion of glyoxylate and propionyl-CoA to beta-methylmalate. Also has very weak citramalate synthase activity in vitro. This Rattus norvegicus (Rat) protein is Citramalyl-CoA lyase, mitochondrial (Clybl).